The sequence spans 226 residues: 2-C-methyl-D-erythritol 4-phosphate cytidylyltransferase (226 aa).

The protein belongs to the IspD/TarI cytidylyltransferase family. IspD subfamily.

The enzyme catalyses 2-C-methyl-D-erythritol 4-phosphate + CTP + H(+) = 4-CDP-2-C-methyl-D-erythritol + diphosphate. Its pathway is isoprenoid biosynthesis; isopentenyl diphosphate biosynthesis via DXP pathway; isopentenyl diphosphate from 1-deoxy-D-xylulose 5-phosphate: step 2/6. In terms of biological role, catalyzes the formation of 4-diphosphocytidyl-2-C-methyl-D-erythritol from CTP and 2-C-methyl-D-erythritol 4-phosphate (MEP). The protein is 2-C-methyl-D-erythritol 4-phosphate cytidylyltransferase of Haemophilus ducreyi (strain 35000HP / ATCC 700724).